Consider the following 911-residue polypeptide: General transcription factor 3C polypeptide 2 (911 aa).

2 disordered regions span residues 24–187 (DSPG…RRRA) and 205–297 (ALPA…MAPN). Polar residues predominate over residues 35–46 (DVKTSSEMTSAE). The residue at position 63 (Ser-63) is a Phosphoserine. Over residues 64-81 (PDQRRLPPEQESLSRLEQ) the composition is skewed to basic and acidic residues. Residues 92-112 (SKPRASKPGRKRGGRTRKGPK) are compositionally biased toward basic residues. The segment covering 114–123 (PQQPNPPSAP) has biased composition (pro residues). 5 positions are modified to phosphoserine: Ser-132, Ser-165, Ser-167, Ser-220, and Ser-260. The span at 253–262 (EAEDVEESEG) shows a compositional bias: acidic residues. The span at 263-277 (PSESSSEPEPVVPRS) shows a compositional bias: low complexity. WD repeat units lie at residues 366–426 (PEDG…MNET), 427–483 (HPLS…AWEL), 484–535 (PGTP…IYKV), 536–603 (QCVA…SLKL), 604–654 (YPFQ…NSIK), and 655–690 (RFLSTELAWLLPYNGVTVAQDNCYASYGLCGIHYID). Ser-597 bears the Phosphoserine mark. The interval 765-785 (SPEGPDHSSASSGVPNPPKAR) is disordered. Residues Ser-871, Ser-892, and Ser-893 each carry the phosphoserine modification. The disordered stretch occupies residues 889-911 (FQPSSPTRRPGFSPTSHRLLPTP). A Phosphothreonine modification is found at Thr-895. Ser-901 bears the Phosphoserine mark.

As to quaternary structure, part of the TFIIIC subcomplex TFIIIC2, consisting of six subunits, GTF3C1, GTF3C2, GTF3C3, GTF3C4, GTF3C5 and GTF3C6.

Its subcellular location is the nucleus. Required for RNA polymerase III-mediated transcription. Component of TFIIIC that initiates transcription complex assembly on tRNA and is required for transcription of 5S rRNA and other stable nuclear and cytoplasmic RNAs. May play a direct role in stabilizing interactions of TFIIIC2 with TFIIIC1. The sequence is that of General transcription factor 3C polypeptide 2 (GTF3C2) from Homo sapiens (Human).